Here is a 356-residue protein sequence, read N- to C-terminus: MRVTDFSFELPESLIAHYPMPERSSCRLLSLDGPTGALTHGTFTDLLDKLNPGDLLVFNNTRVIPARLFGRKASGGKIEVLVERMLDEKRILAHIRASKAPKPGAELLLGDDESINATMTARHGALFEVEFNDDRSVLDILNSIGHIPLPPYIDRPDEDADRELYQTVYSEKPGAVAAPTAGLHFDEPLLEKLRAKGVEMAFVTLHVGAGTFQPVRVDTIEDHIMHSEYAEVPQDVVEAVLAAKARGNRVIAVGTTSVRSLESAAQAAKNDLIEPFFDDTQIFIYPGFQYKVVDALVTNFHLPESTLIMLVSAFAGYQHTMNAYKAAVEEKYRFFSYGDAMFITYNPQAINERVGE.

The protein belongs to the QueA family. In terms of assembly, monomer.

It localises to the cytoplasm. It carries out the reaction 7-aminomethyl-7-carbaguanosine(34) in tRNA + S-adenosyl-L-methionine = epoxyqueuosine(34) in tRNA + adenine + L-methionine + 2 H(+). It participates in tRNA modification; tRNA-queuosine biosynthesis. In terms of biological role, transfers and isomerizes the ribose moiety from AdoMet to the 7-aminomethyl group of 7-deazaguanine (preQ1-tRNA) to give epoxyqueuosine (oQ-tRNA). This Escherichia coli O1:K1 / APEC protein is S-adenosylmethionine:tRNA ribosyltransferase-isomerase.